Here is a 418-residue protein sequence, read N- to C-terminus: Glutamyl-tRNA(Gln) amidotransferase subunit D (418 aa).

One can recognise an Asparaginase/glutaminase domain in the interval 74-405 (KNISILSTGG…EESKELMSKN (332 aa)). Catalysis depends on residues Thr-84, Thr-160, Asp-161, and Lys-237.

This sequence belongs to the asparaginase 1 family. GatD subfamily. In terms of assembly, heterodimer of GatD and GatE.

It carries out the reaction L-glutamyl-tRNA(Gln) + L-glutamine + ATP + H2O = L-glutaminyl-tRNA(Gln) + L-glutamate + ADP + phosphate + H(+). In terms of biological role, allows the formation of correctly charged Gln-tRNA(Gln) through the transamidation of misacylated Glu-tRNA(Gln) in organisms which lack glutaminyl-tRNA synthetase. The reaction takes place in the presence of glutamine and ATP through an activated gamma-phospho-Glu-tRNA(Gln). The GatDE system is specific for glutamate and does not act on aspartate. This Methanococcus maripaludis (strain C5 / ATCC BAA-1333) protein is Glutamyl-tRNA(Gln) amidotransferase subunit D.